Here is a 122-residue protein sequence, read N- to C-terminus: Large ribosomal subunit protein uL14 (122 aa).

It belongs to the universal ribosomal protein uL14 family. As to quaternary structure, part of the 50S ribosomal subunit. Forms a cluster with proteins L3 and L19. In the 70S ribosome, L14 and L19 interact and together make contacts with the 16S rRNA in bridges B5 and B8.

Binds to 23S rRNA. Forms part of two intersubunit bridges in the 70S ribosome. This Geobacillus thermodenitrificans (strain NG80-2) protein is Large ribosomal subunit protein uL14.